Here is a 316-residue protein sequence, read N- to C-terminus: Pantothenate kinase (316 aa).

An ATP-binding site is contributed by 95-102; sequence GSVAVGKS.

This sequence belongs to the prokaryotic pantothenate kinase family.

Its subcellular location is the cytoplasm. The catalysed reaction is (R)-pantothenate + ATP = (R)-4'-phosphopantothenate + ADP + H(+). Its pathway is cofactor biosynthesis; coenzyme A biosynthesis; CoA from (R)-pantothenate: step 1/5. This is Pantothenate kinase from Shewanella sp. (strain ANA-3).